The primary structure comprises 505 residues: Ribose import ATP-binding protein RbsA 2 (505 aa).

2 ABC transporter domains span residues 13 to 249 (LALE…VGRD) and 259 to 503 (VRAG…TGRA). Position 45–52 (45–52 (GENGAGKS)) interacts with ATP.

It belongs to the ABC transporter superfamily. Ribose importer (TC 3.A.1.2.1) family. In terms of assembly, the complex is composed of an ATP-binding protein (RbsA), two transmembrane proteins (RbsC) and a solute-binding protein (RbsB).

The protein localises to the cell membrane. The catalysed reaction is D-ribose(out) + ATP + H2O = D-ribose(in) + ADP + phosphate + H(+). In terms of biological role, part of the ABC transporter complex RbsABC involved in ribose import. Responsible for energy coupling to the transport system. The polypeptide is Ribose import ATP-binding protein RbsA 2 (Streptomyces avermitilis (strain ATCC 31267 / DSM 46492 / JCM 5070 / NBRC 14893 / NCIMB 12804 / NRRL 8165 / MA-4680)).